The sequence spans 247 residues: 3-deoxy-manno-octulosonate cytidylyltransferase (247 aa).

The protein belongs to the KdsB family.

Its subcellular location is the cytoplasm. It catalyses the reaction 3-deoxy-alpha-D-manno-oct-2-ulosonate + CTP = CMP-3-deoxy-beta-D-manno-octulosonate + diphosphate. It participates in nucleotide-sugar biosynthesis; CMP-3-deoxy-D-manno-octulosonate biosynthesis; CMP-3-deoxy-D-manno-octulosonate from 3-deoxy-D-manno-octulosonate and CTP: step 1/1. Its pathway is bacterial outer membrane biogenesis; lipopolysaccharide biosynthesis. Its function is as follows. Activates KDO (a required 8-carbon sugar) for incorporation into bacterial lipopolysaccharide in Gram-negative bacteria. In Methylobacterium nodulans (strain LMG 21967 / CNCM I-2342 / ORS 2060), this protein is 3-deoxy-manno-octulosonate cytidylyltransferase.